Consider the following 240-residue polypeptide: MNRDEARKKIIFALDVNGIAEIDRYAGLLSDRVGMFKIGKELFTACGPEAVATVRRHGGQVFLDLKYHDIPNTVAKAMLEAARLGVQLANLHALGGLEMMETAASAVRREFGDDRPRLLAVTILTSSTAETLRRVGIDHPVEEMVVRLACLAREAGMDGVVASPREIGLIRQACGPDFLIVTPGVRPSFASQDDQKRIMSPDDAVREGADYLVIGRPIAKADDPVRAVDMIVDEIVAGCP.

Residues aspartate 15, lysine 37, 64 to 73 (DLKYHDIPNT), threonine 125, arginine 186, glutamine 195, glycine 215, and arginine 216 contribute to the substrate site. The active-site Proton donor is the lysine 66.

It belongs to the OMP decarboxylase family. Type 1 subfamily. Homodimer.

The catalysed reaction is orotidine 5'-phosphate + H(+) = UMP + CO2. It functions in the pathway pyrimidine metabolism; UMP biosynthesis via de novo pathway; UMP from orotate: step 2/2. Its function is as follows. Catalyzes the decarboxylation of orotidine 5'-monophosphate (OMP) to uridine 5'-monophosphate (UMP). In Pelobacter propionicus (strain DSM 2379 / NBRC 103807 / OttBd1), this protein is Orotidine 5'-phosphate decarboxylase.